Consider the following 367-residue polypeptide: GMP synthase [glutamine-hydrolyzing] subunit B (367 aa).

The region spanning Phe2 to Arg190 is the GMPS ATP-PPase domain. Residue Ser29–Thr35 coordinates ATP.

Heterodimer composed of a glutamine amidotransferase subunit (A) and a GMP-binding subunit (B).

It catalyses the reaction XMP + L-glutamine + ATP + H2O = GMP + L-glutamate + AMP + diphosphate + 2 H(+). The protein operates within purine metabolism; GMP biosynthesis; GMP from XMP (L-Gln route): step 1/1. In terms of biological role, catalyzes the synthesis of GMP from XMP. In Saccharolobus solfataricus (strain ATCC 35092 / DSM 1617 / JCM 11322 / P2) (Sulfolobus solfataricus), this protein is GMP synthase [glutamine-hydrolyzing] subunit B (guaAB).